The following is a 330-amino-acid chain: Elongation factor Ts, mitochondrial (330 aa).

A mitochondrion-targeting transit peptide spans 1 to 16 (MYRNCRKAFTFSLRHY).

Belongs to the EF-Ts family.

The protein localises to the mitochondrion. Its function is as follows. Associates with the EF-Tu.GDP complex and induces the exchange of GDP to GTP. It remains bound to the aminoacyl-tRNA.EF-Tu.GTP complex up to the GTP hydrolysis stage on the ribosome. The polypeptide is Elongation factor Ts, mitochondrial (Laccaria bicolor (strain S238N-H82 / ATCC MYA-4686) (Bicoloured deceiver)).